Consider the following 102-residue polypeptide: Large ribosomal subunit protein bL21 (102 aa).

The protein belongs to the bacterial ribosomal protein bL21 family. As to quaternary structure, part of the 50S ribosomal subunit. Contacts protein L20.

Functionally, this protein binds to 23S rRNA in the presence of protein L20. In Pseudarthrobacter chlorophenolicus (strain ATCC 700700 / DSM 12829 / CIP 107037 / JCM 12360 / KCTC 9906 / NCIMB 13794 / A6) (Arthrobacter chlorophenolicus), this protein is Large ribosomal subunit protein bL21.